The following is a 437-amino-acid chain: Phosphomethylpyrimidine synthase (437 aa).

Substrate is bound by residues N69, M98, Y127, H163, 185-187, 226-229, and E265; these read SRG and DACR. H269 serves as a coordination point for Zn(2+). A substrate-binding site is contributed by Y292. Residue H333 participates in Zn(2+) binding. [4Fe-4S] cluster-binding residues include C409, C412, and C416.

Belongs to the ThiC family. It depends on [4Fe-4S] cluster as a cofactor.

The catalysed reaction is 5-amino-1-(5-phospho-beta-D-ribosyl)imidazole + S-adenosyl-L-methionine = 4-amino-2-methyl-5-(phosphooxymethyl)pyrimidine + CO + 5'-deoxyadenosine + formate + L-methionine + 3 H(+). It participates in cofactor biosynthesis; thiamine diphosphate biosynthesis. Functionally, catalyzes the synthesis of the hydroxymethylpyrimidine phosphate (HMP-P) moiety of thiamine from aminoimidazole ribotide (AIR) in a radical S-adenosyl-L-methionine (SAM)-dependent reaction. This Clostridium botulinum (strain ATCC 19397 / Type A) protein is Phosphomethylpyrimidine synthase.